We begin with the raw amino-acid sequence, 169 residues long: Cell division inhibitor SulA (169 aa).

Polar residues predominate over residues 1 to 13 (MFTSAHANRSAQA). Positions 1 to 26 (MFTSAHANRSAQASAPAGHYAHRSGE) are disordered. The ftsZ binding stretch occupies residues 106–112 (ALRTGNY). The lon protease binding stretch occupies residues 162-169 (KIHSNLYH).

This sequence belongs to the SulA family. As to quaternary structure, interacts with FtsZ. In terms of processing, is rapidly cleaved and degraded by the Lon protease once DNA damage is repaired.

In terms of biological role, component of the SOS system and an inhibitor of cell division. Accumulation of SulA causes rapid cessation of cell division and the appearance of long, non-septate filaments. In the presence of GTP, binds a polymerization-competent form of FtsZ in a 1:1 ratio, thus inhibiting FtsZ polymerization and therefore preventing it from participating in the assembly of the Z ring. This mechanism prevents the premature segregation of damaged DNA to daughter cells during cell division. This is Cell division inhibitor SulA from Klebsiella pneumoniae subsp. pneumoniae (strain ATCC 700721 / MGH 78578).